Reading from the N-terminus, the 251-residue chain is Triosephosphate isomerase (251 aa).

9–11 (NWK) provides a ligand contact to substrate. Catalysis depends on H95, which acts as the Electrophile. The Proton acceptor role is filled by E167. Residues G173, S212, and 233–234 (GG) each bind substrate.

The protein belongs to the triosephosphate isomerase family. As to quaternary structure, homodimer.

It localises to the cytoplasm. The catalysed reaction is D-glyceraldehyde 3-phosphate = dihydroxyacetone phosphate. It participates in carbohydrate biosynthesis; gluconeogenesis. Its pathway is carbohydrate degradation; glycolysis; D-glyceraldehyde 3-phosphate from glycerone phosphate: step 1/1. Its function is as follows. Involved in the gluconeogenesis. Catalyzes stereospecifically the conversion of dihydroxyacetone phosphate (DHAP) to D-glyceraldehyde-3-phosphate (G3P). The sequence is that of Triosephosphate isomerase from Vibrio sp. (strain ANT-300).